The following is a 454-amino-acid chain: UDP-N-acetylmuramoylalanine--D-glutamate ligase (454 aa).

114–120 (GTNGKTT) contributes to the ATP binding site.

Belongs to the MurCDEF family.

The protein resides in the cytoplasm. It catalyses the reaction UDP-N-acetyl-alpha-D-muramoyl-L-alanine + D-glutamate + ATP = UDP-N-acetyl-alpha-D-muramoyl-L-alanyl-D-glutamate + ADP + phosphate + H(+). It participates in cell wall biogenesis; peptidoglycan biosynthesis. In terms of biological role, cell wall formation. Catalyzes the addition of glutamate to the nucleotide precursor UDP-N-acetylmuramoyl-L-alanine (UMA). This is UDP-N-acetylmuramoylalanine--D-glutamate ligase from Desulfitobacterium hafniense (strain Y51).